Here is a 553-residue protein sequence, read N- to C-terminus: Zinc finger CCHC domain-containing protein 8 homolog (553 aa).

At S59 the chain carries Phosphoserine. The segment at 183-200 adopts a CCHC-type zinc-finger fold; it reads SSCFNCGDTEHSLRDCTK. A phosphoserine mark is found at S292 and S347. Y356 carries the post-translational modification Phosphotyrosine. Residues 388 to 492 form a disordered region; the sequence is LEEETEDPPL…APSTPFKASY (105 aa). The segment covering 395-409 has biased composition (pro residues); the sequence is PPLPPSVPPPQPPPP. A phosphoserine mark is found at S421 and S423. Composition is skewed to polar residues over residues 444–456 and 473–485; these read ASHNTTANESKSP and ESGNNEQSRSAPS.

Belongs to the ZCCHC8 family.

It localises to the nucleus. The protein resides in the nucleoplasm. Functionally, scaffolding subunit of the trimeric nuclear exosome targeting (NEXT) complex, a complex that directs a subset of non-coding short-lived RNAs for exosomal degradation. The RNA exosome is fundamental for the degradation of RNA in eukaryotic nuclei. May be involved in pre-mRNA splicing. The polypeptide is Zinc finger CCHC domain-containing protein 8 homolog (Drosophila melanogaster (Fruit fly)).